Consider the following 88-residue polypeptide: MTNVFKKNIRALRMRYQDIALTLERTHSNGIYAGTLTAHTGENIPFFRNNRTLHSRYNPWIEAERTLPAQHASFFFVASGQVSTSVFS.

This is an uncharacterized protein from Treponema pallidum (strain Nichols).